The primary structure comprises 151 residues: Deoxyuridine 5'-triphosphate nucleotidohydrolase (151 aa).

Substrate is bound by residues 70-72, N83, 87-89, and M97; these read RSG and LID.

Belongs to the dUTPase family. Mg(2+) serves as cofactor.

The catalysed reaction is dUTP + H2O = dUMP + diphosphate + H(+). Its pathway is pyrimidine metabolism; dUMP biosynthesis; dUMP from dCTP (dUTP route): step 2/2. Functionally, this enzyme is involved in nucleotide metabolism: it produces dUMP, the immediate precursor of thymidine nucleotides and it decreases the intracellular concentration of dUTP so that uracil cannot be incorporated into DNA. This chain is Deoxyuridine 5'-triphosphate nucleotidohydrolase, found in Pseudomonas putida (strain ATCC 700007 / DSM 6899 / JCM 31910 / BCRC 17059 / LMG 24140 / F1).